The sequence spans 131 residues: Small ribosomal subunit protein uS11 (131 aa).

The protein belongs to the universal ribosomal protein uS11 family. Part of the 30S ribosomal subunit. Interacts with proteins S7 and S18. Binds to IF-3.

Its function is as follows. Located on the platform of the 30S subunit, it bridges several disparate RNA helices of the 16S rRNA. Forms part of the Shine-Dalgarno cleft in the 70S ribosome. The protein is Small ribosomal subunit protein uS11 of Wolinella succinogenes (strain ATCC 29543 / DSM 1740 / CCUG 13145 / JCM 31913 / LMG 7466 / NCTC 11488 / FDC 602W) (Vibrio succinogenes).